Consider the following 474-residue polypeptide: Aspartyl/glutamyl-tRNA(Asn/Gln) amidotransferase subunit B (474 aa).

Belongs to the GatB/GatE family. GatB subfamily. As to quaternary structure, heterotrimer of A, B and C subunits.

It carries out the reaction L-glutamyl-tRNA(Gln) + L-glutamine + ATP + H2O = L-glutaminyl-tRNA(Gln) + L-glutamate + ADP + phosphate + H(+). It catalyses the reaction L-aspartyl-tRNA(Asn) + L-glutamine + ATP + H2O = L-asparaginyl-tRNA(Asn) + L-glutamate + ADP + phosphate + 2 H(+). Functionally, allows the formation of correctly charged Asn-tRNA(Asn) or Gln-tRNA(Gln) through the transamidation of misacylated Asp-tRNA(Asn) or Glu-tRNA(Gln) in organisms which lack either or both of asparaginyl-tRNA or glutaminyl-tRNA synthetases. The reaction takes place in the presence of glutamine and ATP through an activated phospho-Asp-tRNA(Asn) or phospho-Glu-tRNA(Gln). This is Aspartyl/glutamyl-tRNA(Asn/Gln) amidotransferase subunit B from Desulfotalea psychrophila (strain LSv54 / DSM 12343).